The primary structure comprises 63 residues: Large ribosomal subunit protein uL29 (63 aa).

This sequence belongs to the universal ribosomal protein uL29 family.

The protein is Large ribosomal subunit protein uL29 of Aeromonas salmonicida (strain A449).